Consider the following 414-residue polypeptide: Lactosylceramide alpha-2,3-sialyltransferase (414 aa).

Residues 1–65 (MHTEAVGGAA…MRRPSLLIKD (65 aa)) lie on the Cytoplasmic side of the membrane. The chain crosses the membrane as a helical; Signal-anchor for type II membrane protein span at residues 66–86 (ICKCTLVAFGVWLLYILILNY). At 87 to 414 (TAEECDMKRM…VVEDLSGGIH (328 aa)) the chain is on the lumenal side. Cysteine 194 and cysteine 352 are joined by a disulfide. N-linked (GlcNAc...) asparagine glycosylation is found at asparagine 235, asparagine 279, and asparagine 389.

It belongs to the glycosyltransferase 29 family. As to expression, mainly expressed in brain, and then testis, heart and liver, almost all tissues showed some levels of the gene expression.

It is found in the golgi apparatus membrane. It carries out the reaction a beta-D-Gal-(1-&gt;4)-beta-D-Glc-(1&lt;-&gt;1)-Cer(d18:1(4E)) + CMP-N-acetyl-beta-neuraminate = a ganglioside GM3 (d18:1(4E)) + CMP + H(+). It catalyses the reaction ganglioside GA2 (d18:1(4E)/18:0) + CMP-N-acetyl-beta-neuraminate = ganglioside GM2 (d18:1(4E)/18:0) + CMP + H(+). The enzyme catalyses a beta-D-Gal-(1&lt;-&gt;1')-ceramide + CMP-N-acetyl-beta-neuraminate = N-acetyl-alpha-neuraminosyl-(2-&gt;3)-beta-D-galactosyl-(1&lt;-&gt;1')-ceramide + CMP + H(+). The catalysed reaction is ganglioside GA1 (d18:1(4E)/18:0) + CMP-N-acetyl-beta-neuraminate = ganglioside GM1 (d18:1(4E)/18:0) + CMP + H(+). In terms of biological role, (Microbial infection) Gangliosides GD1b and GT1b (derived from GM3) may serve as receptors for some C.botulinum neurotoxins (minimally types BoNT/A, B, C). Functionally, transfers the sialyl group (N-acetyl-alpha-neuraminyl or NeuAc) from CMP-NeuAc to the non-reducing terminal galactose (Gal) of glycosphingolipids forming gangliosides (important molecules involved in the regulation of multiple cellular processes, including cell proliferation and differentiation, apoptosis, embryogenesis, development, and oncogenesis). Mainly involved in the biosynthesis of ganglioside GM3 but can also use different glycolipids as substrate acceptors such as D-galactosylceramide (GalCer), asialo-GM2 (GA2) and asialo-GM1 (GA1), although less preferentially than beta-D-Gal-(1-&gt;4)-beta-D-Glc-(1&lt;-&gt;1)-Cer (LacCer). This Mus musculus (Mouse) protein is Lactosylceramide alpha-2,3-sialyltransferase (St3gal5).